Consider the following 504-residue polypeptide: Catalase (504 aa).

Catalysis depends on residues H56 and N129. Y339 contacts heme.

Belongs to the catalase family. In terms of assembly, homodimer. Heme serves as cofactor.

The enzyme catalyses 2 H2O2 = O2 + 2 H2O. Functionally, decomposes hydrogen peroxide into water and oxygen; serves to protect cells from the toxic effects of hydrogen peroxide. The protein is Catalase (katA) of Staphylococcus epidermidis.